The sequence spans 182 residues: Translation initiation factor IF-3, chloroplastic (182 aa).

Belongs to the IF-3 family. As to quaternary structure, monomer.

The protein localises to the plastid. The protein resides in the chloroplast. In terms of biological role, IF-3 binds to the 30S ribosomal subunit and shifts the equilibrium between 70S ribosomes and their 50S and 30S subunits in favor of the free subunits, thus enhancing the availability of 30S subunits on which protein synthesis initiation begins. The protein is Translation initiation factor IF-3, chloroplastic of Porphyra purpurea (Red seaweed).